The following is a 605-amino-acid chain: Progranulin (605 aa).

Residues 1–17 form the signal peptide; sequence MWTLVGWTILVAGLVAG. Cystine bridges form between cysteine 126–cysteine 139 and cysteine 133–cysteine 149. An N-linked (GlcNAc...) asparagine glycan is attached at asparagine 197. 6 cysteine pairs are disulfide-bonded: cysteine 297-cysteine 309, cysteine 303-cysteine 319, cysteine 310-cysteine 327, cysteine 320-cysteine 334, cysteine 328-cysteine 341, and cysteine 335-cysteine 348. The segment at 359–386 is disordered; it reads QKTPAQPSRPSQPSPPGPPGPPSPPGPL. Positions 368-385 are enriched in pro residues; it reads PSQPSPPGPPGPPSPPGP. Intrachain disulfides connect cysteine 392–cysteine 404 and cysteine 398–cysteine 414.

This sequence belongs to the granulin family. Progranulin is secreted as a homodimer. Interacts with SLPI; interaction protects progranulin from proteolysis. Interacts (via region corresponding to granulin-7 peptide) with CTSD; stabilizes CTSD and increases its proteolytic activity. Interacts (via region corresponding to granulin-7 peptide) with SORT1; this interaction mediates endocytosis and lysosome delivery of progranulin; interaction occurs at the neuronal cell surface in a stressed nervous system. Interacts with PSAP; facilitates lysosomal delivery of progranulin from the extracellular space and the biosynthetic pathway. Forms a complex with PSAP and M6PR; PSAP bridges the binding between progranulin and M6PR. Forms a complex with PSAP and SORT1; progranulin bridges the interaction between PSAP and SORT1; facilitates lysosomal targeting of PSAP via SORT1; interaction enhances PSAP uptake in primary cortical neurons. Interacts (via regions corresponding to granulin-2 and granulin-7 peptides) with GBA1; this interaction prevents aggregation of GBA1-SCARB2 complex via interaction with HSPA1A upon stress. Interacts (via region corresponding to granulin-7 peptide) with HSPA1A; mediates recruitment of HSPA1A to GBA1 and prevents GBA1 aggregation in response to stress. In terms of processing, cleaved by ELANE; proteolysis is blocked by SLPI and is concentration- and time-dependent and induces CXCL8/IL-8 production; granulin-3 and granulin-4 are resistant to ELANE. Cleaved by CTSL in lysosome thus regulating the maturation and turnover of progranulin within the lysosome.

The protein localises to the secreted. Its subcellular location is the lysosome. In terms of biological role, secreted protein that acts as a key regulator of lysosomal function and as a growth factor involved in inflammation, wound healing and cell proliferation. Regulates protein trafficking to lysosomes, and also the activity of lysosomal enzymes. Also facilitates the acidification of lysosomes, causing degradation of mature CTSD by CTSB. In addition, functions as a wound-related growth factor that acts directly on dermal fibroblasts and endothelial cells to promote division, migration and the formation of capillary-like tubule structures. Also promotes epithelial cell proliferation by blocking TNF-mediated neutrophil activation preventing release of oxidants and proteases. Moreover, modulates inflammation in neurons by preserving neurons survival, axonal outgrowth and neuronal integrity. Its function is as follows. Inhibits epithelial cell proliferation and induces epithelial cells to secrete IL-8. Functionally, stabilizes CTSD through interaction with CTSD leading to maintain its aspartic-type peptidase activity. This is Progranulin (GRN) from Cavia porcellus (Guinea pig).